A 227-amino-acid polypeptide reads, in one-letter code: DNA repair protein RecO (227 aa).

Belongs to the RecO family.

In terms of biological role, involved in DNA repair and RecF pathway recombination. In Pseudomonas syringae pv. syringae (strain B728a), this protein is DNA repair protein RecO.